The sequence spans 515 residues: Serine--tRNA ligase, cytoplasmic (515 aa).

Residues 9–61 are interaction with tRNA; the sequence is RTDKGGDPEIIRETQRKRFKDVSLVDKLVQADTEWRKCRFTADNLNKAKNLCS. L-serine contacts are provided by threonine 271 and arginine 302. ATP-binding positions include 302-304 and 318-321; these read RQE and VHQF. An L-serine-binding site is contributed by glutamate 325. Position 391–394 (391–394) interacts with ATP; that stretch reads ELVS. Residue asparagine 427 coordinates L-serine. Residues 475–515 are disordered; it reads PIDQETTKKQKKQQEGGKKKKHQGGDADLENKVENMSVNDS. The segment covering 479-507 has biased composition (basic and acidic residues); the sequence is ETTKKQKKQQEGGKKKKHQGGDADLENKV. The Nuclear localization signal motif lies at 482–494; it reads KKQKKQQEGGKKK.

The protein belongs to the class-II aminoacyl-tRNA synthetase family. Type-1 seryl-tRNA synthetase subfamily.

The protein resides in the cytoplasm. Its subcellular location is the nucleus. It carries out the reaction tRNA(Ser) + L-serine + ATP = L-seryl-tRNA(Ser) + AMP + diphosphate + H(+). The catalysed reaction is tRNA(Sec) + L-serine + ATP = L-seryl-tRNA(Sec) + AMP + diphosphate + H(+). Its function is as follows. Catalyzes the attachment of serine to tRNA(Ser) in a two-step reaction: serine is first activated by ATP to form Ser-AMP and then transferred to the acceptor end of tRNA(Ser). Is probably also able to aminoacylate tRNA(Sec) with serine, to form the misacylated tRNA L-seryl-tRNA(Sec), which will be further converted into selenocysteinyl-tRNA(Sec). In the nucleus, binds to the vegfa core promoter and prevents myc binding and transcriptional activation by myc. Thereby inhibits the production of vegfa and sprouting angiogenesis mediated by vegfa. The polypeptide is Serine--tRNA ligase, cytoplasmic (sars1) (Danio rerio (Zebrafish)).